Here is a 199-residue protein sequence, read N- to C-terminus: Transcriptional regulatory protein DesR (199 aa).

The 115-residue stretch at 3 to 117 folds into the Response regulatory domain; sequence SIFIAEDQQM…ELANAIRSVM (115 aa). Asp-54 carries the 4-aspartylphosphate modification. The 66-residue stretch at 131-196 folds into the HTH luxR-type domain; the sequence is LYSEANPLTD…EAITRSKEKG (66 aa). The H-T-H motif DNA-binding region spans 155–174; sequence TKEIAQELSIKSGTVRNYIS.

Post-translationally, phosphorylated by DesK.

It localises to the cytoplasm. In terms of biological role, member of the two-component regulatory system DesR/DesK, responsible for cold induction of the des gene coding for the Delta5 acyl-lipid desaturase. This chain is Transcriptional regulatory protein DesR (desR), found in Bacillus subtilis (strain 168).